The sequence spans 393 residues: NAD(P)H-quinone oxidoreductase subunit H, chloroplastic (393 aa).

Belongs to the complex I 49 kDa subunit family. As to quaternary structure, NDH is composed of at least 16 different subunits, 5 of which are encoded in the nucleus.

Its subcellular location is the plastid. It localises to the chloroplast thylakoid membrane. It catalyses the reaction a plastoquinone + NADH + (n+1) H(+)(in) = a plastoquinol + NAD(+) + n H(+)(out). The enzyme catalyses a plastoquinone + NADPH + (n+1) H(+)(in) = a plastoquinol + NADP(+) + n H(+)(out). Functionally, NDH shuttles electrons from NAD(P)H:plastoquinone, via FMN and iron-sulfur (Fe-S) centers, to quinones in the photosynthetic chain and possibly in a chloroplast respiratory chain. The immediate electron acceptor for the enzyme in this species is believed to be plastoquinone. Couples the redox reaction to proton translocation, and thus conserves the redox energy in a proton gradient. The chain is NAD(P)H-quinone oxidoreductase subunit H, chloroplastic from Lotus japonicus (Lotus corniculatus var. japonicus).